A 430-amino-acid polypeptide reads, in one-letter code: MKPSLLCRPLSCFLMLLPWPLATLTSTTLWQCPPGEEPDLDPGQGTLCRPCPPGTFSAAWGSSPCQPHARCSLWRRLEAQVGMATRDTLCGDCWPGWFGPWGVPRVPCQPCSWAPLGTHGCDEWGRRARRGVEVAAGASSGGETRQPGNGTRAGGPEETAAQYAVIAIVPVFCLMGLLGILVCNLLKRKGYHCTAHKEVGPGPGGGGSGINPAYRTEDANEDTIGVLVRLITEKKENAAALEELLKEYHSKQLVQTSHRPVSKLPPAPPNVPHICPHRHHLHTVQGLASLSGPCCSRCSQKKWPEVLLSPEAVAATTPVPSLLPNPTRVPKAGAKAGRQGEITILSVGRFRVARIPEQRTSSMVSEVKTITEAGPSWGDLPDSPQPGLPPEQQALLGSGGSRTKWLKPPAENKAEENRYVVRLSESNLVI.

An N-terminal signal peptide occupies residues 1 to 25; sequence MKPSLLCRPLSCFLMLLPWPLATLT. The Extracellular segment spans residues 26–162; it reads STTLWQCPPG…AGGPEETAAQ (137 aa). One copy of the TNFR-Cys repeat lies at 50–90; it reads PCPPGTFSAAWGSSPCQPHARCSLWRRLEAQVGMATRDTLC. 2 cysteine pairs are disulfide-bonded: cysteine 51-cysteine 65 and cysteine 71-cysteine 90. Low complexity predominate over residues 134 to 143; it reads VAAGASSGGE. A disordered region spans residues 134–156; the sequence is VAAGASSGGETRQPGNGTRAGGP. Asparagine 149 carries an N-linked (GlcNAc...) asparagine glycan. A helical transmembrane segment spans residues 163-183; it reads YAVIAIVPVFCLMGLLGILVC. Residues 184–430 are Cytoplasmic-facing; it reads NLLKRKGYHC…VRLSESNLVI (247 aa). Position 223 is a phosphothreonine (threonine 223). The short motif at 349-352 is the RFRV motif; mediates interaction with STK39 element; sequence RFRV. Positions 373–410 are disordered; it reads AGPSWGDLPDSPQPGLPPEQQALLGSGGSRTKWLKPPA.

It belongs to the RELT family. As to quaternary structure, interacts with TRAF1. Interacts with RELL1, RELL2 and OXSR1. Interacts with PLSCR1. Interacts with STK39. Post-translationally, phosphorylated in vitro by OXSR1. Phosphorylated by STK39. In terms of tissue distribution, spleen, lymph node, brain, breast and peripheral blood leukocytes (at protein level). Expressed highly in bone marrow and fetal liver. Very low levels in skeletal muscle, testis and colon. Not detected in kidney and pancreas.

It is found in the cell membrane. Its subcellular location is the cytoplasm. The protein resides in the perinuclear region. Functionally, may play a role in apoptosis. Induces activation of MAPK14/p38 and MAPK8/JNK MAPK cascades, when overexpressed. Involved in dental enamel formation. The protein is Tumor necrosis factor receptor superfamily member 19L (RELT) of Homo sapiens (Human).